A 337-amino-acid polypeptide reads, in one-letter code: MFVDRVIIELIAGKGGNGVVAWRREKYIPKGGPAGGNGGRGGSVILEADTQISSLDWFRHRRILKAQSGGDGGGNCRQGKNGTDLILKVPCGTLLKDAKSGKVIHDFVEDKERFVLCKGGRGGRGNDSFKTPTHQAPNICTEGTLGEIHHIELELKLIADVGLVGFPNAGKSTLISSLAGLRVKVAAYPFTTLQPNLGFIELDNYKRIYIADIPGIIEGASHNRGLGLEFLRHIERTKLLIFILDASGIDGRTPSHDFRILREEIGAYNPELLERPYLVVLNKIDTEDSPSHIQEFEKNFSISSDMLFKISAVYGEGLQELIEKMTQRLSQKKEIEY.

Residues 1–158 (MFVDRVIIEL…HHIELELKLI (158 aa)) enclose the Obg domain. Residues 159-330 (ADVGLVGFPN…LIEKMTQRLS (172 aa)) enclose the OBG-type G domain. Residues 165 to 172 (GFPNAGKS), 190 to 194 (FTTLQ), 212 to 215 (DIPG), 282 to 285 (NKID), and 311 to 313 (SAV) contribute to the GTP site. Mg(2+) contacts are provided by serine 172 and threonine 192.

This sequence belongs to the TRAFAC class OBG-HflX-like GTPase superfamily. OBG GTPase family. Monomer. The cofactor is Mg(2+).

Its subcellular location is the cytoplasm. Functionally, an essential GTPase which binds GTP, GDP and possibly (p)ppGpp with moderate affinity, with high nucleotide exchange rates and a fairly low GTP hydrolysis rate. Plays a role in control of the cell cycle, stress response, ribosome biogenesis and in those bacteria that undergo differentiation, in morphogenesis control. The polypeptide is GTPase Obg (Protochlamydia amoebophila (strain UWE25)).